The primary structure comprises 137 residues: ATP synthase epsilon chain (137 aa).

This sequence belongs to the ATPase epsilon chain family. In terms of assembly, F-type ATPases have 2 components, CF(1) - the catalytic core - and CF(0) - the membrane proton channel. CF(1) has five subunits: alpha(3), beta(3), gamma(1), delta(1), epsilon(1). CF(0) has three main subunits: a, b and c.

It is found in the cell inner membrane. Its function is as follows. Produces ATP from ADP in the presence of a proton gradient across the membrane. This chain is ATP synthase epsilon chain, found in Pseudoalteromonas atlantica (strain T6c / ATCC BAA-1087).